The primary structure comprises 212 residues: MPTREIRHPLIRHKLGLMRRADISTKNFRELAQEVGALLTYEATQDLPLETYEIDGWCGKVQVEKIAGKKITVVPILRAGIGMLDGVLSLIPGAKVSAVGVARNEETLEAHTYLEKLAPDINQRLALIIDPMLATGGSMVATIDLLKKAGCKEIRAMVLVAAPEGIEVVEKAHPDVQIYTASIDQRLNEHGYIVPGLGDAGDKIFGTKQKDA.

5-phospho-alpha-D-ribose 1-diphosphate is bound by residues R78, R103, and 130-138; that span reads DPMLATGGS. Uracil is bound by residues I193 and 198–200; that span reads GDA. Residue D199 coordinates 5-phospho-alpha-D-ribose 1-diphosphate.

Belongs to the UPRTase family. It depends on Mg(2+) as a cofactor.

The enzyme catalyses UMP + diphosphate = 5-phospho-alpha-D-ribose 1-diphosphate + uracil. The protein operates within pyrimidine metabolism; UMP biosynthesis via salvage pathway; UMP from uracil: step 1/1. Its activity is regulated as follows. Allosterically activated by GTP. Its function is as follows. Catalyzes the conversion of uracil and 5-phospho-alpha-D-ribose 1-diphosphate (PRPP) to UMP and diphosphate. The sequence is that of Uracil phosphoribosyltransferase from Pseudomonas entomophila (strain L48).